A 218-amino-acid polypeptide reads, in one-letter code: Runt-related transcription factor 2 (218 aa).

The Runt domain maps to 67–195 (RGHKFYLEKK…TVDGPREPRR (129 aa)). The segment at 122–138 (VMAGNDENYSAELRNAS) is required for interaction with FOXO1. A disordered region spans residues 189–218 (GPREPRRHRQKLDDSKPSLFSDRLSDLGRI). Residue Lys-204 forms a Glycyl lysine isopeptide (Lys-Gly) (interchain with G-Cter in SUMO2) linkage.

In terms of assembly, heterodimer of an alpha and a beta subunit. The alpha subunit binds DNA as a monomer and through the Runt domain. DNA-binding is increased by heterodimerization. Interacts with XRCC6 (Ku70) and XRCC5 (Ku80). Interacts with CCNB1, KAT6A and KAT6B. Interacts with HIVEP3. Interacts with IFI204. Interaction with SATB2; the interaction results in enhanced DNA binding and transactivation by these transcription factors. Binds to HIPK3. Interacts with FOXO1 (via a C-terminal region); the interaction inhibits RUNX2 transcriptional activity towards BGLAP. Interacts with FOXP3. Interacts with TMEM119. Interacts with OLFM2. Interacts with IPO7; the interaction inhibits RUNX2 nuclear translocation in osteoblasts. Phosphorylated; probably by MAP kinases (MAPK). Phosphorylation by HIPK3 is required for the SPEN/MINT and FGF2 transactivation during osteoblastic differentiation.

The protein localises to the nucleus. The protein resides in the cytoplasm. Transcription factor involved in osteoblastic differentiation and skeletal morphogenesis. Essential for the maturation of osteoblasts and both intramembranous and endochondral ossification. CBF binds to the core site, 5'-PYGPYGGT-3', of a number of enhancers and promoters, including murine leukemia virus, polyomavirus enhancer, T-cell receptor enhancers, osteocalcin, osteopontin, bone sialoprotein, alpha 1(I) collagen, LCK, IL-3 and GM-CSF promoters. Inhibits KAT6B-dependent transcriptional activation. In osteoblasts, supports transcription activation: synergizes with SPEN/MINT to enhance FGFR2-mediated activation of the osteocalcin FGF-responsive element (OCFRE). The polypeptide is Runt-related transcription factor 2 (Runx2) (Rattus norvegicus (Rat)).